The sequence spans 468 residues: 3-isopropylmalate dehydratase large subunit (468 aa).

[4Fe-4S] cluster-binding residues include C349, C409, and C412.

This sequence belongs to the aconitase/IPM isomerase family. LeuC type 1 subfamily. In terms of assembly, heterodimer of LeuC and LeuD. [4Fe-4S] cluster is required as a cofactor.

It carries out the reaction (2R,3S)-3-isopropylmalate = (2S)-2-isopropylmalate. It participates in amino-acid biosynthesis; L-leucine biosynthesis; L-leucine from 3-methyl-2-oxobutanoate: step 2/4. In terms of biological role, catalyzes the isomerization between 2-isopropylmalate and 3-isopropylmalate, via the formation of 2-isopropylmaleate. The polypeptide is 3-isopropylmalate dehydratase large subunit (Shewanella baltica (strain OS223)).